We begin with the raw amino-acid sequence, 288 residues long: Bis(5'-nucleosyl)-tetraphosphatase, symmetrical (288 aa).

Belongs to the Ap4A hydrolase family.

It catalyses the reaction P(1),P(4)-bis(5'-adenosyl) tetraphosphate + H2O = 2 ADP + 2 H(+). Its function is as follows. Hydrolyzes diadenosine 5',5'''-P1,P4-tetraphosphate to yield ADP. The sequence is that of Bis(5'-nucleosyl)-tetraphosphatase, symmetrical from Pseudomonas putida (strain GB-1).